Reading from the N-terminus, the 87-residue chain is Small ribosomal subunit protein uS17 (87 aa).

It belongs to the universal ribosomal protein uS17 family. Part of the 30S ribosomal subunit.

One of the primary rRNA binding proteins, it binds specifically to the 5'-end of 16S ribosomal RNA. The protein is Small ribosomal subunit protein uS17 of Staphylococcus haemolyticus (strain JCSC1435).